Reading from the N-terminus, the 430-residue chain is Adenylosuccinate synthetase (430 aa).

GTP contacts are provided by residues 17–23 and 45–47; these read GDEGKGK and GHT. Residue Asp-18 is the Proton acceptor of the active site. Asp-18 and Gly-45 together coordinate Mg(2+). IMP-binding positions include 18 to 21, 43 to 46, Thr-139, Arg-153, Asn-229, Thr-244, and Arg-308; these read DEGK and NAGH. His-46 acts as the Proton donor in catalysis. 304–310 lines the substrate pocket; that stretch reads TVTGRRR. Residues Arg-310, 336-338, and 418-420 each bind GTP; these read KLD and GVG.

It belongs to the adenylosuccinate synthetase family. In terms of assembly, homodimer. The cofactor is Mg(2+).

It localises to the cytoplasm. It carries out the reaction IMP + L-aspartate + GTP = N(6)-(1,2-dicarboxyethyl)-AMP + GDP + phosphate + 2 H(+). Its pathway is purine metabolism; AMP biosynthesis via de novo pathway; AMP from IMP: step 1/2. Plays an important role in the de novo pathway and in the salvage pathway of purine nucleotide biosynthesis. Catalyzes the first committed step in the biosynthesis of AMP from IMP. This chain is Adenylosuccinate synthetase, found in Cryptococcus neoformans var. neoformans serotype D (strain B-3501A) (Filobasidiella neoformans).